The primary structure comprises 804 residues: Enhancer of polycomb homolog 2 (804 aa).

4 disordered regions span residues 372–395 (QSSD…ENDP), 484–508 (GFSS…DRHC), 603–624 (QSQQ…SDCM), and 646–669 (PVRS…VQPS). Composition is skewed to polar residues over residues 611–624 (SHPK…SDCM) and 654–669 (DQNA…VQPS).

Belongs to the enhancer of polycomb family.

The protein resides in the nucleus. In terms of biological role, may play a role in transcription or DNA repair. The polypeptide is Enhancer of polycomb homolog 2 (epc2) (Xenopus laevis (African clawed frog)).